The chain runs to 161 residues: Cyclic pyranopterin monophosphate synthase (161 aa).

Residues 75 to 77 (MCH) and 115 to 116 (ME) contribute to the substrate site. Asp130 is an active-site residue.

The protein belongs to the MoaC family. In terms of assembly, homohexamer; trimer of dimers.

It carries out the reaction (8S)-3',8-cyclo-7,8-dihydroguanosine 5'-triphosphate = cyclic pyranopterin phosphate + diphosphate. It participates in cofactor biosynthesis; molybdopterin biosynthesis. Its function is as follows. Catalyzes the conversion of (8S)-3',8-cyclo-7,8-dihydroguanosine 5'-triphosphate to cyclic pyranopterin monophosphate (cPMP). The chain is Cyclic pyranopterin monophosphate synthase from Bacillus cereus (strain G9842).